Here is a 207-residue protein sequence, read N- to C-terminus: Small ribosomal subunit protein uS4 (207 aa).

The segment at 33–54 (KLDSKPGQHGRTSGARTSDYGN) is disordered. Residues 42 to 53 (GRTSGARTSDYG) are compositionally biased toward polar residues. Residues 97-157 (SRLDNVVYRM…EKSKKQVRIA (61 aa)) form the S4 RNA-binding domain.

The protein belongs to the universal ribosomal protein uS4 family. In terms of assembly, part of the 30S ribosomal subunit. Contacts protein S5. The interaction surface between S4 and S5 is involved in control of translational fidelity.

Functionally, one of the primary rRNA binding proteins, it binds directly to 16S rRNA where it nucleates assembly of the body of the 30S subunit. In terms of biological role, with S5 and S12 plays an important role in translational accuracy. This chain is Small ribosomal subunit protein uS4, found in Ralstonia pickettii (strain 12J).